Consider the following 192-residue polypeptide: Na(+)-translocating ferredoxin:NAD(+) oxidoreductase complex subunit A (192 aa).

Helical transmembrane passes span 4–24 (IFIM…FLGI), 38–58 (VGMG…TYVV), 71–91 (LQTI…EMII), 101–121 (ALGV…VALI), 133–153 (IFNG…FAGI), and 169–189 (FPIA…FSGM).

This sequence belongs to the NqrDE/RnfAE family. In terms of assembly, the complex is composed of six subunits: RnfA, RnfB, RnfC, RnfD, RnfE and RnfG.

The protein resides in the cell membrane. It catalyses the reaction 2 reduced [2Fe-2S]-[ferredoxin] + Na(+)(in) + NAD(+) + H(+) = 2 oxidized [2Fe-2S]-[ferredoxin] + Na(+)(out) + NADH. Functionally, part of a membrane-bound complex that couples electron transfer with translocation of ions across the membrane. Couples electron transfer from reduced ferredoxin to NAD(+) with electrogenic movement of Na(+) out of the cell. Involved in caffeate respiration. In Acetobacterium woodii (strain ATCC 29683 / DSM 1030 / JCM 2381 / KCTC 1655 / WB1), this protein is Na(+)-translocating ferredoxin:NAD(+) oxidoreductase complex subunit A.